Consider the following 325-residue polypeptide: Elongation factor P--(R)-beta-lysine ligase (325 aa).

Residue 76 to 78 coordinates substrate; that stretch reads SPE. ATP-binding positions include 100–102 and N109; that span reads RNE. Y118 is a binding site for substrate. ATP is bound at residue 244-245; sequence EL. Position 251 (E251) interacts with substrate. G300 contributes to the ATP binding site.

This sequence belongs to the class-II aminoacyl-tRNA synthetase family. EpmA subfamily. Homodimer.

The catalysed reaction is D-beta-lysine + L-lysyl-[protein] + ATP = N(6)-((3R)-3,6-diaminohexanoyl)-L-lysyl-[protein] + AMP + diphosphate + H(+). In terms of biological role, with EpmB is involved in the beta-lysylation step of the post-translational modification of translation elongation factor P (EF-P). Catalyzes the ATP-dependent activation of (R)-beta-lysine produced by EpmB, forming a lysyl-adenylate, from which the beta-lysyl moiety is then transferred to the epsilon-amino group of a conserved specific lysine residue in EF-P. The sequence is that of Elongation factor P--(R)-beta-lysine ligase from Photorhabdus laumondii subsp. laumondii (strain DSM 15139 / CIP 105565 / TT01) (Photorhabdus luminescens subsp. laumondii).